The chain runs to 55 residues: MPQLNPHPWFSIFITSWLILIIILLPKIKSHIPNNSPTNKKNMLTTPMPWTWPWT.

Residues 4-24 traverse the membrane as a helical segment; sequence LNPHPWFSIFITSWLILIIIL.

Belongs to the ATPase protein 8 family. As to quaternary structure, component of the ATP synthase complex composed at least of ATP5F1A/subunit alpha, ATP5F1B/subunit beta, ATP5MC1/subunit c (homooctomer), MT-ATP6/subunit a, MT-ATP8/subunit 8, ATP5ME/subunit e, ATP5MF/subunit f, ATP5MG/subunit g, ATP5MK/subunit k, ATP5MJ/subunit j, ATP5F1C/subunit gamma, ATP5F1D/subunit delta, ATP5F1E/subunit epsilon, ATP5PF/subunit F6, ATP5PB/subunit b, ATP5PD/subunit d, ATP5PO/subunit OSCP. ATP synthase complex consists of a soluble F(1) head domain (subunits alpha(3) and beta(3)) - the catalytic core - and a membrane F(0) domain - the membrane proton channel (subunits c, a, 8, e, f, g, k and j). These two domains are linked by a central stalk (subunits gamma, delta, and epsilon) rotating inside the F1 region and a stationary peripheral stalk (subunits F6, b, d, and OSCP).

It localises to the mitochondrion membrane. In terms of biological role, subunit 8, of the mitochondrial membrane ATP synthase complex (F(1)F(0) ATP synthase or Complex V) that produces ATP from ADP in the presence of a proton gradient across the membrane which is generated by electron transport complexes of the respiratory chain. ATP synthase complex consist of a soluble F(1) head domain - the catalytic core - and a membrane F(1) domain - the membrane proton channel. These two domains are linked by a central stalk rotating inside the F(1) region and a stationary peripheral stalk. During catalysis, ATP synthesis in the catalytic domain of F(1) is coupled via a rotary mechanism of the central stalk subunits to proton translocation. In vivo, can only synthesize ATP although its ATP hydrolase activity can be activated artificially in vitro. Part of the complex F(0) domain. The protein is ATP synthase F(0) complex subunit 8 of Pelomedusa subrufa (African side-necked turtle).